Reading from the N-terminus, the 318-residue chain is Ribosomal RNA small subunit methyltransferase H (318 aa).

S-adenosyl-L-methionine is bound by residues 38–40 (AGH), Asp-57, Leu-91, Asp-105, and Gln-112.

It belongs to the methyltransferase superfamily. RsmH family.

It localises to the cytoplasm. The catalysed reaction is cytidine(1402) in 16S rRNA + S-adenosyl-L-methionine = N(4)-methylcytidine(1402) in 16S rRNA + S-adenosyl-L-homocysteine + H(+). Its function is as follows. Specifically methylates the N4 position of cytidine in position 1402 (C1402) of 16S rRNA. In Clavibacter michiganensis subsp. michiganensis (strain NCPPB 382), this protein is Ribosomal RNA small subunit methyltransferase H.